A 281-amino-acid chain; its full sequence is Elongation factor Ts (281 aa).

Residues 86–89 (TDFV) form an involved in Mg(2+) ion dislocation from EF-Tu region.

Belongs to the EF-Ts family.

Its subcellular location is the cytoplasm. Its function is as follows. Associates with the EF-Tu.GDP complex and induces the exchange of GDP to GTP. It remains bound to the aminoacyl-tRNA.EF-Tu.GTP complex up to the GTP hydrolysis stage on the ribosome. In Beutenbergia cavernae (strain ATCC BAA-8 / DSM 12333 / CCUG 43141 / JCM 11478 / NBRC 16432 / NCIMB 13614 / HKI 0122), this protein is Elongation factor Ts.